An 81-amino-acid polypeptide reads, in one-letter code: Cytochrome c oxidase subunit 7A1, mitochondrial (81 aa).

The N-terminal 21 residues, 1–21 (MRHLLGLPQLASRAFSTTVRQ), are a transit peptide targeting the mitochondrion. The helical transmembrane segment at 51-72 (ILYRLTMTLTVVGTGYSLYWLL) threads the bilayer.

Belongs to the cytochrome c oxidase VIIa family. As to quaternary structure, component of the complex IV (CIV, cytochrome c oxidase). The complex exists as a monomer or a dimer and forms supercomplexes (SCs) in the inner mitochondrial membrane with NADH-ubiquinone oxidoreductase (complex I, CI) and ubiquinol-cytochrome c oxidoreductase (cytochrome b-c1 complex, complex III, CIII), resulting in different assemblies (supercomplex SCI(1)III(2)IV(1) and megacomplex MCI(2)III(2)IV(2)).

The protein localises to the mitochondrion inner membrane. It participates in energy metabolism; oxidative phosphorylation. Component of the mitochondrial respiratory complex IV (CIV, also named cytochrome c oxidase complex), the last enzyme in the mitochondrial electron transport chain which drives oxidative phosphorylation. The CIV complex is the component of the respiratory chain that catalyzes the reduction of oxygen to water. Acts as an assembly factor that specifically drives the homodimerization of CIV complexes, mediating the formation of mitochondrial respiratory supercomplexes (respirasomes) containing two CIV: supercomplxes with two molecules of CIV show improved activity. This Danio rerio (Zebrafish) protein is Cytochrome c oxidase subunit 7A1, mitochondrial.